Here is a 325-residue protein sequence, read N- to C-terminus: Elongation factor P--(R)-beta-lysine ligase (325 aa).

76–78 (SPE) contacts substrate. ATP contacts are provided by residues 100–102 (RNE) and Asn109. Substrate is bound at residue Tyr118. 244 to 245 (EL) contacts ATP. Glu251 provides a ligand contact to substrate. Gly300 is a binding site for ATP.

Belongs to the class-II aminoacyl-tRNA synthetase family. EpmA subfamily. Homodimer.

It carries out the reaction D-beta-lysine + L-lysyl-[protein] + ATP = N(6)-((3R)-3,6-diaminohexanoyl)-L-lysyl-[protein] + AMP + diphosphate + H(+). Functionally, with EpmB is involved in the beta-lysylation step of the post-translational modification of translation elongation factor P (EF-P). Catalyzes the ATP-dependent activation of (R)-beta-lysine produced by EpmB, forming a lysyl-adenylate, from which the beta-lysyl moiety is then transferred to the epsilon-amino group of a conserved specific lysine residue in EF-P. In Photorhabdus laumondii subsp. laumondii (strain DSM 15139 / CIP 105565 / TT01) (Photorhabdus luminescens subsp. laumondii), this protein is Elongation factor P--(R)-beta-lysine ligase.